We begin with the raw amino-acid sequence, 465 residues long: Lysophospholipid acyltransferase 2 (465 aa).

The next 9 membrane-spanning stretches (helical) occupy residues valine 15–leucine 35, phenylalanine 55–isoleucine 75, leucine 86–tyrosine 106, serine 161–phenylalanine 181, alanine 214–leucine 234, tyrosine 266–tryptophan 286, alanine 356–isoleucine 376, valine 399–phenylalanine 419, and valine 434–valine 454. The active site involves histidine 359.

The protein belongs to the membrane-bound acyltransferase family. As to quaternary structure, interacts with GPAT9 and DGAT1. In terms of tissue distribution, expressed in rosette leaves, pollen grains, developing embryos and developing seeds.

It is found in the endoplasmic reticulum membrane. It catalyses the reaction a 1-acyl-sn-glycero-3-phosphocholine + an acyl-CoA = a 1,2-diacyl-sn-glycero-3-phosphocholine + CoA. It carries out the reaction 1-(9Z-octadecenoyl)-sn-glycero-3-phosphocholine + (9Z)-octadecenoyl-CoA = 1,2-di-(9Z-octadecenoyl)-sn-glycero-3-phosphocholine + CoA. The enzyme catalyses 1-(9Z-octadecenoyl)-sn-glycero-3-phosphocholine + (9Z,12Z)-octadecadienoyl-CoA = 1-(9Z)-octadecenoyl-2-(9Z,12Z)-octadecadienoyl-sn-glycero-3-phosphocholine + CoA. The catalysed reaction is (9Z,12Z,15Z)-octadecatrienoyl-CoA + 1-(9Z-octadecenoyl)-sn-glycero-3-phosphocholine = 1-(9Z-octadecaenoyl)-2-(9Z,12Z,15Z-octadecatrienoyl)-sn-glycero-3-phosphocholine + CoA. It catalyses the reaction a 1-acyl-sn-glycero-3-phosphoethanolamine + an acyl-CoA = a 1,2-diacyl-sn-glycero-3-phosphoethanolamine + CoA. It carries out the reaction a 1-acyl-sn-glycero-3-phospho-L-serine + an acyl-CoA = a 1,2-diacyl-sn-glycero-3-phospho-L-serine + CoA. Lysophospholipid acyltransferase with broad specificity. Mediates the conversion of lysophosphatidylethanolamine (1-acyl-sn-glycero-3-phosphoethanolamine or LPE) into phosphatidylethanolamine (1,2-diacyl-sn-glycero-3-phosphoethanolamine or PE) (LPEAT activity). Catalyzes the acylation of lysophosphatidylserine (1-acyl-2-hydroxy-sn-glycero-3-phospho-L-serine or LPS) into phosphatidylserine (1,2-diacyl-sn-glycero-3-phospho-L-serine or PS) (LPSAT activity). Can convert lysophosphatidylcholine (1-acyl-sn-glycero-3-phosphocholine or LPC) into phosphatidylcholine (1,2-diacyl-sn-glycero-3-phosphocholine or PC) (LPCAT activity). Exhibits preference for C18-unsaturated acyl-CoA when transferring an acyl group to lysophosphatidylcholine. Can also utilize lysophosphatidylglycerol (LPG) as substrate in vitro. Has neither activity towards lysophosphatidic acid (LPA) nor lysophosphatidylinositol (LPI). Lysophospholipid acyltransferases catalyze the reacylation step of the phospholipid remodeling pathway also known as the Lands cycle. The primary function of the Lands cycle is to provide a route for acyl remodeling to modify fatty acid (FA) composition of phospholipids derived from the Kennedy pathway. Is involved in PC acyl editing and phosphocholine headgroup exchange between PC and diacylglycerols. This processes control the majority of acyl fluxes through PC to provide polyunsaturated fatty acids for triacylglycerols synthesis in seeds. Involved with LPCAT1 in the direct incorporation of newly synthesized fatty acids exported form the chloroplast into PC through acyl editing. The protein is Lysophospholipid acyltransferase 2 of Arabidopsis thaliana (Mouse-ear cress).